A 191-amino-acid polypeptide reads, in one-letter code: 3-hydroxyanthranilate 3,4-dioxygenase 2 (191 aa).

Arginine 48 is an O2 binding site. Fe cation is bound by residues histidine 52, glutamate 73, and histidine 111. Glutamate 73 is a substrate binding site. Substrate-binding residues include arginine 115 and glutamate 125.

Belongs to the 3-HAO family. It depends on Fe(2+) as a cofactor.

The protein localises to the cytoplasm. The enzyme catalyses 3-hydroxyanthranilate + O2 = (2Z,4Z)-2-amino-3-carboxymuconate 6-semialdehyde. The protein operates within cofactor biosynthesis; NAD(+) biosynthesis; quinolinate from L-kynurenine: step 3/3. In terms of biological role, catalyzes the oxidative ring opening of 3-hydroxyanthranilate to 2-amino-3-carboxymuconate semialdehyde, which spontaneously cyclizes to quinolinate. The protein is 3-hydroxyanthranilate 3,4-dioxygenase 2 (bna1-2) of Aspergillus clavatus (strain ATCC 1007 / CBS 513.65 / DSM 816 / NCTC 3887 / NRRL 1 / QM 1276 / 107).